The sequence spans 346 residues: Phenylalanine--tRNA ligase alpha subunit (346 aa).

A Mg(2+)-binding site is contributed by Glu260.

It belongs to the class-II aminoacyl-tRNA synthetase family. Phe-tRNA synthetase alpha subunit type 1 subfamily. Tetramer of two alpha and two beta subunits. It depends on Mg(2+) as a cofactor.

The protein resides in the cytoplasm. The enzyme catalyses tRNA(Phe) + L-phenylalanine + ATP = L-phenylalanyl-tRNA(Phe) + AMP + diphosphate + H(+). In Herpetosiphon aurantiacus (strain ATCC 23779 / DSM 785 / 114-95), this protein is Phenylalanine--tRNA ligase alpha subunit.